We begin with the raw amino-acid sequence, 526 residues long: Peptide chain release factor 3 (526 aa).

The tr-type G domain occupies Asp-9–Gln-277. Residues Ser-18 to Thr-25, Asp-86 to His-90, and Asn-140 to Asp-143 contribute to the GTP site.

This sequence belongs to the TRAFAC class translation factor GTPase superfamily. Classic translation factor GTPase family. PrfC subfamily.

It localises to the cytoplasm. Increases the formation of ribosomal termination complexes and stimulates activities of RF-1 and RF-2. It binds guanine nucleotides and has strong preference for UGA stop codons. It may interact directly with the ribosome. The stimulation of RF-1 and RF-2 is significantly reduced by GTP and GDP, but not by GMP. The protein is Peptide chain release factor 3 of Shewanella pealeana (strain ATCC 700345 / ANG-SQ1).